We begin with the raw amino-acid sequence, 77 residues long: Conotoxin VnMEKL-0223 (77 aa).

The N-terminal stretch at 1-19 is a signal peptide; sequence MQKLTILLLVAAVLMSTQA. Positions 20 to 37 are excised as a propeptide; that stretch reads LIKGGGEKRPKEKIKFLS. Intrachain disulfides connect C51–C65, C58–C69, and C64–C74.

The protein belongs to the conotoxin O2 superfamily. Expressed by the venom duct.

The protein localises to the secreted. In Conus ventricosus (Mediterranean cone), this protein is Conotoxin VnMEKL-0223.